Reading from the N-terminus, the 235-residue chain is Thiamine import ATP-binding protein ThiQ (235 aa).

An ABC transporter domain is found at 2–230 (LKLIDITWLY…QASASALLGI (229 aa)). 32-39 (GPSGAGKS) is an ATP binding site.

The protein belongs to the ABC transporter superfamily. Thiamine importer (TC 3.A.1.19.1) family. The complex is composed of two ATP-binding proteins (ThiQ), two transmembrane proteins (ThiP) and a solute-binding protein (ThiB).

The protein resides in the cell inner membrane. It catalyses the reaction thiamine(out) + ATP + H2O = thiamine(in) + ADP + phosphate + H(+). Its function is as follows. Part of the ABC transporter complex ThiBPQ involved in thiamine import. Responsible for energy coupling to the transport system. In Salmonella choleraesuis (strain SC-B67), this protein is Thiamine import ATP-binding protein ThiQ.